A 997-amino-acid chain; its full sequence is DNA polymerase I (997 aa).

Residues 174–261 (VMPTQLLDLF…VPCVFSLEDS (88 aa)) enclose the 5'-3' exonuclease domain. In terms of domain architecture, 3'-5' exonuclease spans 428 to 589 (VPDVSLHTES…LYHYLKLRLE (162 aa)).

It belongs to the DNA polymerase type-A family.

The enzyme catalyses DNA(n) + a 2'-deoxyribonucleoside 5'-triphosphate = DNA(n+1) + diphosphate. In addition to polymerase activity, this DNA polymerase exhibits 3'-5' and 5'-3' exonuclease activity. The protein is DNA polymerase I (polA) of Treponema pallidum (strain Nichols).